The chain runs to 370 residues: Probable protein phosphatase 2C 67 (370 aa).

The region spanning 35 to 344 is the PPM-type phosphatase domain; the sequence is TFGEFSMAMI…DDITVIVVYL (310 aa). Mn(2+) contacts are provided by aspartate 77, glycine 78, aspartate 276, and aspartate 335.

It belongs to the PP2C family. Interacts with SAUR19. Interacts with AHA2 at the plasma membrane. It depends on Mg(2+) as a cofactor. The cofactor is Mn(2+).

Its subcellular location is the cell membrane. The catalysed reaction is O-phospho-L-seryl-[protein] + H2O = L-seryl-[protein] + phosphate. It carries out the reaction O-phospho-L-threonyl-[protein] + H2O = L-threonyl-[protein] + phosphate. In terms of biological role, dephosphorylates and represses plasma membrane H(+)-ATPases (PM H(+)-ATPases, e.g. AHA1 and AHA2), thus influencing negatively plant growth and fitness. Promotes the apical hook maintenance of etiolated seedlings. The polypeptide is Probable protein phosphatase 2C 67 (Arabidopsis thaliana (Mouse-ear cress)).